An 84-amino-acid polypeptide reads, in one-letter code: Cell division topological specificity factor (84 aa).

It belongs to the MinE family.

Its function is as follows. Prevents the cell division inhibition by proteins MinC and MinD at internal division sites while permitting inhibition at polar sites. This ensures cell division at the proper site by restricting the formation of a division septum at the midpoint of the long axis of the cell. The sequence is that of Cell division topological specificity factor from Pseudomonas fluorescens (strain ATCC BAA-477 / NRRL B-23932 / Pf-5).